Reading from the N-terminus, the 373-residue chain is Transaldolase (373 aa).

The Schiff-base intermediate with substrate role is filled by lysine 143.

The protein belongs to the transaldolase family. Type 2 subfamily.

It is found in the cytoplasm. It carries out the reaction D-sedoheptulose 7-phosphate + D-glyceraldehyde 3-phosphate = D-erythrose 4-phosphate + beta-D-fructose 6-phosphate. Its pathway is carbohydrate degradation; pentose phosphate pathway; D-glyceraldehyde 3-phosphate and beta-D-fructose 6-phosphate from D-ribose 5-phosphate and D-xylulose 5-phosphate (non-oxidative stage): step 2/3. In terms of biological role, transaldolase is important for the balance of metabolites in the pentose-phosphate pathway. The chain is Transaldolase from Mycolicibacterium paratuberculosis (strain ATCC BAA-968 / K-10) (Mycobacterium paratuberculosis).